The sequence spans 296 residues: HTH-type transcriptional activator AmpR (296 aa).

Positions 6–63 (LPLNALRAFEASARHLSFTRAAIELCVTQAAVSHQVKSLEERLGVALFKRLPRGLMLT) constitute an HTH lysR-type domain. Positions 23–42 (FTRAAIELCVTQAAVSHQVK) form a DNA-binding region, H-T-H motif. The segment at 83–296 (LLERFEGGHY…EMAAVEARGR (214 aa)) is includes the LysR substrate-binding / effector-binding domain, involved in binding to specific cell-wall-derived muropeptide products, some of which have signaling functions, leading to disparate responses such as antibiotic resistance, virulence, and host cell inflammation. The region spanning 91–289 (HYRDVLTVGA…AFRGWLLEMA (199 aa)) is the LysR substrate-binding domain.

Belongs to the LysR transcriptional regulatory family. As to quaternary structure, homodimer.

The protein resides in the cytoplasm. It localises to the membrane. In terms of biological role, transcription regulator that plays a critical role in the expression of beta-lactamase AmpC, acting by positive regulation of the ampC gene. Has a wider role in the regulation of expression of genes involved in proteolysis, quorum sensing, and virulence. Acts by binding directly to the promoter region of the ampC gene. Probably does not regulate transcription of its own gene. The chain is HTH-type transcriptional activator AmpR (ampR) from Pseudomonas aeruginosa (strain ATCC 15692 / DSM 22644 / CIP 104116 / JCM 14847 / LMG 12228 / 1C / PRS 101 / PAO1).